A 440-amino-acid polypeptide reads, in one-letter code: Chromosome partition protein MukF (440 aa).

The interval 208–236 is leucine-zipper; it reads LSETSGTLRELQDTLEAAGDKLQANLLRI.

This sequence belongs to the MukF family. In terms of assembly, interacts, and probably forms a ternary complex, with MukE and MukB via its C-terminal region. The complex formation is stimulated by calcium or magnesium. It is required for an interaction between MukE and MukB.

The protein localises to the cytoplasm. It localises to the nucleoid. Its function is as follows. Involved in chromosome condensation, segregation and cell cycle progression. May participate in facilitating chromosome segregation by condensation DNA from both sides of a centrally located replisome during cell division. Not required for mini-F plasmid partitioning. Probably acts via its interaction with MukB and MukE. Overexpression results in anucleate cells. It has a calcium binding activity. The sequence is that of Chromosome partition protein MukF from Salmonella typhi.